Reading from the N-terminus, the 84-residue chain is Elongation factor 1-beta (84 aa).

This sequence belongs to the EF-1-beta/EF-1-delta family.

Its function is as follows. Promotes the exchange of GDP for GTP in EF-1-alpha/GDP, thus allowing the regeneration of EF-1-alpha/GTP that could then be used to form the ternary complex EF-1-alpha/GTP/AAtRNA. The chain is Elongation factor 1-beta from Methanoculleus marisnigri (strain ATCC 35101 / DSM 1498 / JR1).